Here is a 347-residue protein sequence, read N- to C-terminus: Holliday junction branch migration complex subunit RuvB (347 aa).

Residues N13 to Y195 form a large ATPase domain (RuvB-L) region. Residues L34, R35, G76, K79, T80, T81, E142 to Y144, R185, Y195, and R232 contribute to the ATP site. Position 80 (T80) interacts with Mg(2+). Residues T196–Q266 are small ATPAse domain (RuvB-S). Positions D269–K347 are head domain (RuvB-H). Position 329 (R329) interacts with DNA.

Belongs to the RuvB family. As to quaternary structure, homohexamer. Forms an RuvA(8)-RuvB(12)-Holliday junction (HJ) complex. HJ DNA is sandwiched between 2 RuvA tetramers; dsDNA enters through RuvA and exits via RuvB. An RuvB hexamer assembles on each DNA strand where it exits the tetramer. Each RuvB hexamer is contacted by two RuvA subunits (via domain III) on 2 adjacent RuvB subunits; this complex drives branch migration. In the full resolvosome a probable DNA-RuvA(4)-RuvB(12)-RuvC(2) complex forms which resolves the HJ.

It is found in the cytoplasm. It catalyses the reaction ATP + H2O = ADP + phosphate + H(+). The RuvA-RuvB-RuvC complex processes Holliday junction (HJ) DNA during genetic recombination and DNA repair, while the RuvA-RuvB complex plays an important role in the rescue of blocked DNA replication forks via replication fork reversal (RFR). RuvA specifically binds to HJ cruciform DNA, conferring on it an open structure. The RuvB hexamer acts as an ATP-dependent pump, pulling dsDNA into and through the RuvAB complex. RuvB forms 2 homohexamers on either side of HJ DNA bound by 1 or 2 RuvA tetramers; 4 subunits per hexamer contact DNA at a time. Coordinated motions by a converter formed by DNA-disengaged RuvB subunits stimulates ATP hydrolysis and nucleotide exchange. Immobilization of the converter enables RuvB to convert the ATP-contained energy into a lever motion, pulling 2 nucleotides of DNA out of the RuvA tetramer per ATP hydrolyzed, thus driving DNA branch migration. The RuvB motors rotate together with the DNA substrate, which together with the progressing nucleotide cycle form the mechanistic basis for DNA recombination by continuous HJ branch migration. Branch migration allows RuvC to scan DNA until it finds its consensus sequence, where it cleaves and resolves cruciform DNA. This Lactobacillus helveticus (strain DPC 4571) protein is Holliday junction branch migration complex subunit RuvB.